A 273-amino-acid chain; its full sequence is Dermonecrotic toxin LspaSicTox-alphaIA2iv (273 aa).

The active site involves His5. 2 residues coordinate Mg(2+): Glu25 and Asp27. His41 functions as the Nucleophile in the catalytic mechanism. 2 cysteine pairs are disulfide-bonded: Cys45/Cys51 and Cys47/Cys190. Position 85 (Asp85) interacts with Mg(2+).

This sequence belongs to the arthropod phospholipase D family. Class II subfamily. It depends on Mg(2+) as a cofactor. In terms of tissue distribution, expressed by the venom gland.

The protein resides in the secreted. It carries out the reaction an N-(acyl)-sphingosylphosphocholine = an N-(acyl)-sphingosyl-1,3-cyclic phosphate + choline. The catalysed reaction is an N-(acyl)-sphingosylphosphoethanolamine = an N-(acyl)-sphingosyl-1,3-cyclic phosphate + ethanolamine. The enzyme catalyses a 1-acyl-sn-glycero-3-phosphocholine = a 1-acyl-sn-glycero-2,3-cyclic phosphate + choline. It catalyses the reaction a 1-acyl-sn-glycero-3-phosphoethanolamine = a 1-acyl-sn-glycero-2,3-cyclic phosphate + ethanolamine. Dermonecrotic toxins cleave the phosphodiester linkage between the phosphate and headgroup of certain phospholipids (sphingolipid and lysolipid substrates), forming an alcohol (often choline) and a cyclic phosphate. This toxin acts on sphingomyelin (SM). It may also act on ceramide phosphoethanolamine (CPE), lysophosphatidylcholine (LPC) and lysophosphatidylethanolamine (LPE), but not on lysophosphatidylserine (LPS), and lysophosphatidylglycerol (LPG). It acts by transphosphatidylation, releasing exclusively cyclic phosphate products as second products. Induces dermonecrosis, hemolysis, increased vascular permeability, edema, inflammatory response, and platelet aggregation. The protein is Dermonecrotic toxin LspaSicTox-alphaIA2iv of Loxosceles spadicea (Recluse spider).